We begin with the raw amino-acid sequence, 494 residues long: Potassium voltage-gated channel subfamily A member 2 (494 aa).

The tract at residues 1-25 (MTVATGDPSDEAAAHPGNPAEYDPD) is disordered. Residues 1–124 (MTVATGDPSD…YELGDEAIEL (124 aa)) are tetramerization domain. Topologically, residues 1–159 (MTVATGDPSD…LLFEYPESSG (159 aa)) are cytoplasmic. The chain crosses the membrane as a helical span at residues 160 to 181 (PARIIAIISVMVILISIVSFCL). Over 182-216 (ETLPIFRNDDDEPHSVFDTNTNTTIYFTSTYFTDP) the chain is Extracellular. An N-linked (GlcNAc...) asparagine glycan is attached at N203. Residues 217–238 (FFILETLCIIWFSFEFLVRLFA) traverse the membrane as a helical segment. C239 carries the S-palmitoyl cysteine lipid modification. The Cytoplasmic portion of the chain corresponds to 239 to 249 (CPSKSGFFGNV). Residues 250–270 (MNIIDVVAIIPYFITLATELA) form a helical membrane-spanning segment. At 271 to 284 (EKPEDGQAGQQAMS) the chain is on the extracellular side. A helical; Voltage-sensor transmembrane segment spans residues 285 to 305 (LAILRVIRLVRVFRIFKLSRH). At 306 to 320 (SKGLQILGQTLKASM) the chain is on the cytoplasmic side. The segment at 307–320 (KGLQILGQTLKASM) is S4-S5 linker. Residues 321–342 (RELGLLIFFLFIGVILFSSAVY) traverse the membrane as a helical segment. At 343 to 356 (FAEADEPESQFESI) the chain is on the extracellular side. An intramembrane region (helical) is located at residues 357 to 368 (PDAFWWAVVSMT). The short motif at 369-374 (TVGYGD) is the Selectivity filter element. Residues 369–376 (TVGYGDMV) lie within the membrane without spanning it. Over 377-383 (PTTIGGK) the chain is Extracellular. A helical membrane pass occupies residues 384–412 (IVGSLCAIAGVLTIALPVPVIVSNFNYFY). The Cytoplasmic portion of the chain corresponds to 413–494 (HRETEGEEQA…VNITKMLTDV (82 aa)). Positions 492-494 (TDV) match the PDZ-binding motif.

It belongs to the potassium channel family. A (Shaker) (TC 1.A.1.2) subfamily. Kv1.2/KCNA2 sub-subfamily. As to quaternary structure, homotetramer and heterotetramer with other family members. Expressed in oligodendrocytes.

Its subcellular location is the cell membrane. The enzyme catalyses K(+)(in) = K(+)(out). Functionally, voltage-gated potassium channel that mediates transmembrane potassium transport in excitable membranes, primarily in the brain and central nervous system. Prevents aberrant action potential firing and regulates neuronal output. Forms tetrameric potassium-selective channels through which potassium ions pass in accordance with their electrochemical gradient. The channel alternates between opened and closed conformations in response to the voltage difference across the membrane. Can form functional homotetrameric channels and heterotetrameric channels with other family members; the channels characteristics depend critically on the types of channel-forming alpha subunits that are present. Channel properties are modulated by cytoplasmic beta subunits that regulate the subcellular location of the alpha subunits. In vivo, membranes probably contain a mixture of heteromeric potassium channel complexes, making it difficult to assign currents observed in intact tissues to any particular potassium channel family member. Homotetrameric KCNA2 forms a delayed-rectifier potassium channel that opens in response to membrane depolarization, followed by slow spontaneous channel closure. Regulates neuronal excitability and plays a role as pacemaker in the regulation of neuronal action potentials. KCNA2-containing channels play a presynaptic role and prevent hyperexcitability and aberrant action potential firing. Response to toxins that are selective for KCNA2-containing potassium channels suggests that in Purkinje cells, dendritic subthreshold KCNA2-containing potassium channels prevent random spontaneous calcium spikes, suppressing dendritic hyperexcitability without hindering the generation of somatic action potentials, and thereby play an important role in motor coordination. Plays a role in the induction of long-term potentiation of neuron excitability in the CA3 layer of the hippocampus. The protein is Potassium voltage-gated channel subfamily A member 2 (kcna2) of Oncorhynchus mykiss (Rainbow trout).